We begin with the raw amino-acid sequence, 461 residues long: Xyloglucan 6-xylosyltransferase 2 (461 aa).

The Cytoplasmic portion of the chain corresponds to 1 to 20 (MIERCLGAYRCRRIQRALRQ). Residues 21-40 (LKVTILCLLLTVVVLRSTIG) traverse the membrane as a helical; Signal-anchor for type II membrane protein segment. At 41–461 (AGKFGTPEQD…KAVKVQTNQV (421 aa)) the chain is on the lumenal side. The disordered stretch occupies residues 74-95 (QTGGDSSSGDGGGNSGGSNNYE). Asparagine 432 is a glycosylation site (N-linked (GlcNAc...) asparagine).

Belongs to the glycosyltransferase 34 family. As to quaternary structure, homodimer. Interacts with XXT1 and XXT5. Interacts with FUT1 and XLT2.

It localises to the golgi apparatus membrane. The enzyme catalyses Transfers an alpha-D-xylosyl residue from UDP-D-xylose to a glucose residue in xyloglucan, forming an alpha-(1-&gt;6)-D-xylosyl-D-glucose linkage.. Functionally, xylosyltransferase specific to UDP-D-xylose that accepts both cellopentaose and cellohexaose as substrates, with a better use of cellohexaose, to produce xyloglucan. Adds preferentially the first xylosyl residue to the fourth glucosyl residue from the reducing end of both acceptors. Transfer one xylose mainly to the second glucose residue from the non-reducing end. The acceptor should have a minimum of four glucose residues. Associates with other xyloglucan-synthesizing enzymes to form multiprotein complexes for xyloglucan synthesis in the Golgi. The chain is Xyloglucan 6-xylosyltransferase 2 (XXT2) from Arabidopsis thaliana (Mouse-ear cress).